The primary structure comprises 203 residues: LexA repressor (203 aa).

A DNA-binding region (H-T-H motif) is located at residues 30–50 (VREICQAVSLKSTSTVHGHLK). Active-site for autocatalytic cleavage activity residues include S127 and K164.

This sequence belongs to the peptidase S24 family. In terms of assembly, homodimer.

It catalyses the reaction Hydrolysis of Ala-|-Gly bond in repressor LexA.. Represses a number of genes involved in the response to DNA damage (SOS response), including recA and lexA. In the presence of single-stranded DNA, RecA interacts with LexA causing an autocatalytic cleavage which disrupts the DNA-binding part of LexA, leading to derepression of the SOS regulon and eventually DNA repair. The polypeptide is LexA repressor (Clostridium perfringens (strain SM101 / Type A)).